The sequence spans 364 residues: tRNA 2-selenouridine synthase (364 aa).

The region spanning 14 to 137 (LLADTPLIDV…LRQTAIQATW (124 aa)) is the Rhodanese domain. Cys-97 functions as the S-selanylcysteine intermediate in the catalytic mechanism.

It belongs to the SelU family. As to quaternary structure, monomer.

It carries out the reaction 5-methylaminomethyl-2-thiouridine(34) in tRNA + selenophosphate + (2E)-geranyl diphosphate + H2O + H(+) = 5-methylaminomethyl-2-selenouridine(34) in tRNA + (2E)-thiogeraniol + phosphate + diphosphate. The catalysed reaction is 5-methylaminomethyl-2-thiouridine(34) in tRNA + (2E)-geranyl diphosphate = 5-methylaminomethyl-S-(2E)-geranyl-thiouridine(34) in tRNA + diphosphate. It catalyses the reaction 5-methylaminomethyl-S-(2E)-geranyl-thiouridine(34) in tRNA + selenophosphate + H(+) = 5-methylaminomethyl-2-(Se-phospho)selenouridine(34) in tRNA + (2E)-thiogeraniol. The enzyme catalyses 5-methylaminomethyl-2-(Se-phospho)selenouridine(34) in tRNA + H2O = 5-methylaminomethyl-2-selenouridine(34) in tRNA + phosphate. Involved in the post-transcriptional modification of the uridine at the wobble position (U34) of tRNA(Lys), tRNA(Glu) and tRNA(Gln). Catalyzes the conversion of 2-thiouridine (S2U-RNA) to 2-selenouridine (Se2U-RNA). Acts in a two-step process involving geranylation of 2-thiouridine (S2U) to S-geranyl-2-thiouridine (geS2U) and subsequent selenation of the latter derivative to 2-selenouridine (Se2U) in the tRNA chain. The sequence is that of tRNA 2-selenouridine synthase from Salmonella agona (strain SL483).